A 401-amino-acid polypeptide reads, in one-letter code: Multidrug resistance protein MdtH (401 aa).

The next 11 membrane-spanning stretches (helical) occupy residues 13 to 33, 34 to 54, 88 to 108, 139 to 159, 164 to 184, 211 to 231, 248 to 268, 275 to 295, 298 to 318, 341 to 361, and 366 to 386; these read YFLIIDNMFVVIGFYAVFPLI, SIHFVEQLGWTAFLVGFALGL, IGFIIMSLAHTPTLLCAACIL, ILMLEDSICAIIGITLGSWLL, FQLVCLTGAILFFIAGMFNAW, FIIYTLTLSGYYILSAQVMLM, YIYITEAILSLLLIIPITYWM, ETRLMLGLVIMIISLSPIGSV, LYELLILISLFYIGSIVAEPA, LSLALGGTLGYSGGGWLYDLG, and FYQLPWIALSIIGTITVLILY.

It belongs to the major facilitator superfamily. DHA1 family. MdtH (TC 2.A.1.2.21) subfamily.

The protein localises to the cell inner membrane. In Blochmanniella floridana, this protein is Multidrug resistance protein MdtH.